We begin with the raw amino-acid sequence, 233 residues long: Probable O-methyltransferase Rv1703c (233 aa).

Residues valine 55, glutamate 77, 79-80, and glutamate 102 each bind S-adenosyl-L-methionine; that span reads GT. Residue aspartate 157 participates in a divalent metal cation binding. Aspartate 159 is a binding site for S-adenosyl-L-methionine. Residues aspartate 185 and asparagine 186 each coordinate a divalent metal cation.

It belongs to the class I-like SAM-binding methyltransferase superfamily. Cation-dependent O-methyltransferase family.

Specifically methylates an O atom of its substrate. The sequence is that of Probable O-methyltransferase Rv1703c from Mycobacterium tuberculosis (strain ATCC 25618 / H37Rv).